The sequence spans 273 residues: Dermonecrotic toxin LsaSicTox-alphaIB1aiii (273 aa).

H5 is a catalytic residue. Residues E25 and D27 each contribute to the Mg(2+) site. The active-site Nucleophile is H41. Intrachain disulfides connect C45–C51 and C47–C190. D85 serves as a coordination point for Mg(2+).

The protein belongs to the arthropod phospholipase D family. Class II subfamily. Mg(2+) serves as cofactor. As to expression, expressed by the venom gland.

It is found in the secreted. It carries out the reaction an N-(acyl)-sphingosylphosphocholine = an N-(acyl)-sphingosyl-1,3-cyclic phosphate + choline. The enzyme catalyses an N-(acyl)-sphingosylphosphoethanolamine = an N-(acyl)-sphingosyl-1,3-cyclic phosphate + ethanolamine. The catalysed reaction is a 1-acyl-sn-glycero-3-phosphocholine = a 1-acyl-sn-glycero-2,3-cyclic phosphate + choline. It catalyses the reaction a 1-acyl-sn-glycero-3-phosphoethanolamine = a 1-acyl-sn-glycero-2,3-cyclic phosphate + ethanolamine. Its function is as follows. Dermonecrotic toxins cleave the phosphodiester linkage between the phosphate and headgroup of certain phospholipids (sphingolipid and lysolipid substrates), forming an alcohol (often choline) and a cyclic phosphate. This toxin acts on sphingomyelin (SM). It may also act on ceramide phosphoethanolamine (CPE), lysophosphatidylcholine (LPC) and lysophosphatidylethanolamine (LPE), but not on lysophosphatidylserine (LPS), and lysophosphatidylglycerol (LPG). It acts by transphosphatidylation, releasing exclusively cyclic phosphate products as second products. Induces dermonecrosis, hemolysis, increased vascular permeability, edema, inflammatory response, and platelet aggregation. The polypeptide is Dermonecrotic toxin LsaSicTox-alphaIB1aiii (Loxosceles sabina (Tucson recluse spider)).